The following is a 262-amino-acid chain: Small ribosomal subunit protein eS1 (262 aa).

The protein belongs to the eukaryotic ribosomal protein eS1 family. As to quaternary structure, component of the small ribosomal subunit. Mature ribosomes consist of a small (40S) and a large (60S) subunit. The 40S subunit contains about 33 different proteins and 1 molecule of RNA (18S). The 60S subunit contains about 49 different proteins and 3 molecules of RNA (25S, 5.8S and 5S).

The protein localises to the cytoplasm. The polypeptide is Small ribosomal subunit protein eS1 (Plasmodium knowlesi (strain H)).